A 404-amino-acid chain; its full sequence is tRNA (carboxymethyluridine(34)-5-O)-methyltransferase (404 aa).

Serine 238 is modified (phosphoserine).

As to quaternary structure, interacts with TRM112A and TRM112B.

The catalysed reaction is 5-(carboxymethyl)uridine(34) in tRNA + S-adenosyl-L-methionine = 5-(2-methoxy-2-oxoethyl)uridine(34) in tRNA + S-adenosyl-L-homocysteine. Catalyzes the methylation of 5-carboxymethyl uridine to 5-methylcarboxymethyl uridine at the wobble position of the anticodon loop in tRNA via its methyltransferase domain. Catalyzes the last step in the formation of 5-methylcarboxymethyl uridine at the wobble position of the anticodon loop in target tRNA. The sequence is that of tRNA (carboxymethyluridine(34)-5-O)-methyltransferase from Arabidopsis thaliana (Mouse-ear cress).